A 269-amino-acid chain; its full sequence is ATP synthase subunit delta (269 aa).

It belongs to the ATPase delta chain family. F-type ATPases have 2 components, F(1) - the catalytic core - and F(0) - the membrane proton channel. F(1) has five subunits: alpha(3), beta(3), gamma(1), delta(1), epsilon(1). F(0) has three main subunits: a(1), b(2) and c(10-14). The alpha and beta chains form an alternating ring which encloses part of the gamma chain. F(1) is attached to F(0) by a central stalk formed by the gamma and epsilon chains, while a peripheral stalk is formed by the delta and b chains.

It localises to the cell membrane. Its function is as follows. F(1)F(0) ATP synthase produces ATP from ADP in the presence of a proton or sodium gradient. F-type ATPases consist of two structural domains, F(1) containing the extramembraneous catalytic core and F(0) containing the membrane proton channel, linked together by a central stalk and a peripheral stalk. During catalysis, ATP synthesis in the catalytic domain of F(1) is coupled via a rotary mechanism of the central stalk subunits to proton translocation. In terms of biological role, this protein is part of the stalk that links CF(0) to CF(1). It either transmits conformational changes from CF(0) to CF(1) or is implicated in proton conduction. This chain is ATP synthase subunit delta, found in Thermobifida fusca (strain YX).